The sequence spans 334 residues: MKEIIEKLAKFENLSGVEMTDVIERIVTGRVTEAQIASLLLALKMKGETPEERTAIAQVMRGHAQHIPTEIHDAMDNCGTGGDKSFSFNISTTAAFVLAGGGIHMAKHGNRSISSKSGSADVLEALGINLDLKPAELGKVFDKTGIVFLFAKNMHPAMKYIMPARLELGIPTIMNLTGPLIHPMALETQLLGISRPELLESTAQVLKNMGRKRAIVVAGPEGLDEAGLNGTTKIALLENGEISLSSFTPEDLGMEGYAMEDIRGGNAQENAEILLSVLKNEASPFLETTVLNAGLGFYANGKIDSIKEGVALARQVIARGKALEKLRLLQEYQK.

Residues glycine 79, 82–83, serine 87, 89–92, 107–115, and serine 119 contribute to the 5-phospho-alpha-D-ribose 1-diphosphate site; these read GD, NIST, and KHGNRSISS. Anthranilate is bound at residue glycine 79. Serine 91 contacts Mg(2+). Asparagine 110 contacts anthranilate. Arginine 165 is a binding site for anthranilate. 2 residues coordinate Mg(2+): aspartate 224 and glutamate 225.

Belongs to the anthranilate phosphoribosyltransferase family. In terms of assembly, homodimer. Mg(2+) serves as cofactor.

The catalysed reaction is N-(5-phospho-beta-D-ribosyl)anthranilate + diphosphate = 5-phospho-alpha-D-ribose 1-diphosphate + anthranilate. The protein operates within amino-acid biosynthesis; L-tryptophan biosynthesis; L-tryptophan from chorismate: step 2/5. Functionally, catalyzes the transfer of the phosphoribosyl group of 5-phosphorylribose-1-pyrophosphate (PRPP) to anthranilate to yield N-(5'-phosphoribosyl)-anthranilate (PRA). In Streptococcus pneumoniae (strain 70585), this protein is Anthranilate phosphoribosyltransferase.